The chain runs to 2327 residues: Acetyl-CoA carboxylase 2 (2327 aa).

The interval 1 to 62 is disordered; sequence MTSTHVATLG…NGGVSDSKKL (62 aa). Positions 134–641 constitute a Biotin carboxylation domain; it reads PIHSVLVANN…HTGWLDTRIA (508 aa). In terms of domain architecture, ATP-grasp spans 287–481; sequence ECCLDSIPDE…AAQVAVGMGI (195 aa). 313–370 contacts ATP; the sequence is CQVVGYPAMIKASWGGGGKGIRKVHNDDEVRTLFKQVQGEVPGSPIFIMRLAAQSRHL. Mg(2+) contacts are provided by E436, E450, and N452. 3 residues coordinate Mn(2+): E436, E450, and N452. R454 is a catalytic residue. The region spanning 768–842 is the Biotinyl-binding domain; it reads LQNDHDPSKL…QAGDLIARLD (75 aa). K809 is subject to N6-biotinyllysine. A CoA carboxyltransferase N-terminal domain is found at 1568 to 1909; that stretch reads PYQPLSVIDL…YIGGPLPVTT (342 aa). The segment at 1568–2227 is carboxyltransferase; sequence PYQPLSVIDL…EDVLAKEIRA (660 aa). The CoA site is built by R1818, K2119, and R2121. Residues 1913 to 2227 enclose the CoA carboxyltransferase C-terminal domain; it reads PPDRPVAYIP…EDVLAKEIRA (315 aa).

As to quaternary structure, homodimer. It depends on biotin as a cofactor. The cofactor is Mg(2+). Mn(2+) is required as a cofactor.

It is found in the cytoplasm. Its subcellular location is the cytosol. The catalysed reaction is hydrogencarbonate + acetyl-CoA + ATP = malonyl-CoA + ADP + phosphate + H(+). It catalyses the reaction N(6)-biotinyl-L-lysyl-[protein] + hydrogencarbonate + ATP = N(6)-carboxybiotinyl-L-lysyl-[protein] + ADP + phosphate + H(+). It participates in lipid metabolism; malonyl-CoA biosynthesis; malonyl-CoA from acetyl-CoA: step 1/1. Its function is as follows. Multifunctional enzyme that catalyzes the carboxylation of acetyl-CoA, forming malonyl-CoA, which is used in the plastid for fatty acid synthesis and in the cytosol in various biosynthetic pathways including fatty acid elongation. The polypeptide is Acetyl-CoA carboxylase 2 (ACC2) (Oryza sativa subsp. japonica (Rice)).